A 255-amino-acid polypeptide reads, in one-letter code: MRPRPIRLLLTALVGAGLAFAPVSAVAAPTATASASADVGALDGCYTWSGTLSEGSSGEAVRQLQIRVAGYPGTGAQLAIDGQFGPATKAAVQRFQSAYGLAADGIAGPATFNKIYQLQDDDCTPVNFTYAELNRCNSDWSGGKVSAATARANALVTMWKLQAMRHAMGDKPITVNGGFRSVTCNSNVGGASNSRHMYGHAADLGAGSQGFCALAQAARNHGFTEILGPGYPGHNDHTHVAGGDGRFWSAPSCGI.

Positions 1–42 are cleaved as a signal peptide; it reads MRPRPIRLLLTALVGAGLAFAPVSAVAAPTATASASADVGAL. Asp-43 bears the Blocked amino end (Asp) mark. 2 disulfide bridges follow: Cys-45–Cys-123 and Cys-136–Cys-184. Substrate is bound at residue Arg-180. His-196 serves as a coordination point for Zn(2+). Cys-212 and Cys-253 form a disulfide bridge. The active-site Proton donor is the His-234. His-237 and His-239 together coordinate Zn(2+).

Belongs to the peptidase M15 family. The cofactor is Zn(2+). The N-terminus is partially blocked as a result of the cyclization of the first two amino acids into anhydroaspartylglycine imide.

Its subcellular location is the secreted. It catalyses the reaction Cleavage of the bond: (Ac)2-L-lysyl-D-alanyl-|-D-alanine.. Its function is as follows. This enzyme catalyzes carboxypeptidation and transpeptidation reactions involved in bacterial cell wall metabolism. It effectively catalyzes the transfer of the N-alpha, N-epsilon-diacetyl-L-lysyl-D-alanyl electrophilic group of the standard tripeptide substrate N-alpha,N-epsilon-diacetyl-L-lysyl-D-alanyl-D-alanine to water. It also performs a weak beta-lactamase activity, hydrolyzing penicillin into penicilloate at a very low rate. This Streptomyces albus G protein is Zinc D-Ala-D-Ala carboxypeptidase.